Reading from the N-terminus, the 354-residue chain is DNA polymerase IV 2 (354 aa).

The UmuC domain occupies 4 to 184 (IIHIDMDAFY…LPVKKFHGVG (181 aa)). 2 residues coordinate Mg(2+): D8 and D102. E103 is an active-site residue.

It belongs to the DNA polymerase type-Y family. Monomer. Mg(2+) serves as cofactor.

It is found in the cytoplasm. It catalyses the reaction DNA(n) + a 2'-deoxyribonucleoside 5'-triphosphate = DNA(n+1) + diphosphate. In terms of biological role, poorly processive, error-prone DNA polymerase involved in untargeted mutagenesis. Copies undamaged DNA at stalled replication forks, which arise in vivo from mismatched or misaligned primer ends. These misaligned primers can be extended by PolIV. Exhibits no 3'-5' exonuclease (proofreading) activity. May be involved in translesional synthesis, in conjunction with the beta clamp from PolIII. This chain is DNA polymerase IV 2 (dinB2), found in Rhizobium meliloti (strain 1021) (Ensifer meliloti).